An 852-amino-acid chain; its full sequence is Potassium voltage-gated channel subfamily KQT member 2 (852 aa).

Topologically, residues 1 to 90 (MVQKSRNGGV…LYNVLERPRG (90 aa)) are cytoplasmic. Serine 52 is modified (phosphoserine; by PKA). The chain crosses the membrane as a helical span at residues 91–113 (WAFIYHAYVFLLVFSCLVLSVFS). Residues 114–123 (TIKEYEKSSE) lie on the Extracellular side of the membrane. Residues 124 to 145 (GALYILEIVTIVVFGVEYFVRI) form a helical membrane-spanning segment. The Cytoplasmic segment spans residues 146–163 (WAAGCCCRYRGWRGRLKF). The chain crosses the membrane as a helical span at residues 164–183 (ARKPFCVIDIMVLIASIAVL). At 184–196 (AAGSQGNVFATSA) the chain is on the extracellular side. A helical; Voltage-sensor transmembrane segment spans residues 197 to 215 (LRSLRFLQILRMIRMDRRG). Arginine 214 lines the a 1,2-diacyl-sn-glycero-3-phospho-(1D-myo-inositol-4,5-bisphosphate) pocket. The Cytoplasmic portion of the chain corresponds to 216-227 (GTWKLLGSVVYA). Residues 222 to 323 (GSVVYAHSKE…SGFALKVQEQ (102 aa)) are mediates interaction with SLC5A3. The helical transmembrane segment at 228–253 (HSKELVTAWYIGFLCLILASFLVYLA) threads the bilayer. Lysine 230 provides a ligand contact to a 1,2-diacyl-sn-glycero-3-phospho-(1D-myo-inositol-4,5-bisphosphate). Residues 254 to 263 (EKGENDHFDT) lie on the Extracellular side of the membrane. An intramembrane region (pore-forming) is located at residues 264-276 (YADALWWGLITLT). The Selectivity filter motif lies at 277–282 (TIGYGD). At 277–287 (TIGYGDKYPQT) the chain is on the extracellular side. A helical membrane pass occupies residues 288 to 314 (WNGRLLAATFTLIGVSFFALPAGILGS). Residues 315-852 (GFALKVQEQH…GDVAWAGPRK (538 aa)) lie on the Cytoplasmic side of the membrane. The interval 317-522 (ALKVQEQHRQ…EDLTPGLKVS (206 aa)) is mediates interaction with calmodulin. Lysine 327 contacts a 1,2-diacyl-sn-glycero-3-phospho-(1D-myo-inositol-4,5-bisphosphate). Positions 404 to 469 (TFRKEPQPEP…SKVPKSWSFG (66 aa)) are disordered. Residues 440-457 (PQAQTVRRSPSADQSLDD) show a composition bias toward polar residues. Serine 448, serine 450, serine 454, serine 458, serine 460, and serine 489 each carry phosphoserine. Disordered regions lie at residues 579–601 (GPTI…EDPS), 643–662 (GAKE…SRDH), and 672–718 (IVRS…DHGS). The span at 583–592 (TDKDRTKGPA) shows a compositional bias: basic and acidic residues. Position 655 is a phosphoserine (serine 655). A phosphoserine mark is found at serine 781 and serine 783. The disordered stretch occupies residues 818-852 (ESDTDSDLCTPCGPPPRSATGEGPFGDVAWAGPRK).

The protein belongs to the potassium channel family. KQT (TC 1.A.1.15) subfamily. Kv7.2/KCNQ2 sub-subfamily. Heterotetramer with KCNQ3; forms heterotetrameric M-channel responsible for the M-current. Homotetrameric; forms a functional homotetrameric channel resulting in the expression of a small M-current. Interacts with calmodulin; the interaction is calcium-independent, constitutive and participates in the proper assembly of a functional M-channel. May associate with KCNE2. Interacts with IQCJ-SCHIP1. Interacts (via the pore module) with SLC5A3/SMIT1; forms a coregulatory complex that alters ion selectivity, voltage dependence and gating kinetics of the channel. Interacts with AKAP5; the interaction may help KCNQ2 channel complex to retain calcium-bound calmodulin. Post-translationally, KCNQ2/KCNQ3 heteromeric current can be increased by intracellular cyclic AMP, an effect that depends on phosphorylation of Ser-52 in the N-terminal region. KCNQ2/KCNQ3 are ubiquitinated by NEDD4L. Ubiquitination leads to protein degradation. Degradation induced by NEDD4L is inhibited by USP36. Expressed in brain and sympathetic ganglia. In brain, expressed in cortex, hippocampus, and cerebellum. In sympathetic ganglia, expressed at lower levels in celiac ganglia and superior mesenteric ganglia than in superior cervical ganglia.

It localises to the cell membrane. The enzyme catalyses K(+)(in) = K(+)(out). It catalyses the reaction Rb(+)(in) = Rb(+)(out). It carries out the reaction Cs(+)(in) = Cs(+)(out). The catalysed reaction is Na(+)(in) = Na(+)(out). Its activity is regulated as follows. Phosphatidylinositol-4,5-bisphosphate (PIP2) potentiates the activation of KCNQ channels by enhancing the electro-mechanical coupling of the voltage-sensing domain (VSD) and the pore-forming domain (PD). In the closed state of the channel, PIP2 is anchored at the S2-S3 loop; upon channel activation, PIP2 interacts with the S4-S5 linker and is involved in channel gating. Calcium suppresses KCNQ2 and KCNQ2-KCNQ3 channel currents, with calcium-bound calmodulin inducing a change in channel configuration which leads to the reduction of channel affinity for PIP2 and subsequent current suppression. In terms of biological role, pore-forming subunit of the voltage-gated potassium (Kv) M-channel which is responsible for the M-current, a key controller of neuronal excitability. M-channel is composed of pore-forming subunits KCNQ2 and KCNQ3 assembled as heterotetramers. The native M-current has a slowly activating and deactivating potassium conductance which plays a critical role in determining the subthreshold electrical excitability of neurons as well as the responsiveness to synaptic inputs. M-channel is selectively permeable in vitro to other cations besides potassium, in decreasing order of affinity K(+) &gt; Rb(+) &gt; Cs(+) &gt; Na(+). M-channel association with SLC5A3/SMIT1 alters channel ion selectivity, increasing Na(+) and Cs(+) permeation relative to K(+). Suppressed by activation of the muscarinic acetylcholine receptor CHRM1. In Rattus norvegicus (Rat), this protein is Potassium voltage-gated channel subfamily KQT member 2.